The primary structure comprises 492 residues: 56 kDa U1 small nuclear ribonucleoprotein component (492 aa).

Positions 1–15 (MRPRRRGLAYHHTKP) are enriched in basic residues. Disordered regions lie at residues 1-35 (MRPR…QRRK) and 300-371 (DQFP…NKPG). Positions 18-30 (QLSQGHYPTTSND) are enriched in polar residues. Over residues 310–321 (SNSPSSNSISSS) the composition is skewed to low complexity. Residues 329-353 (TSYQTQPQRHAVNKPSNVLNSSNRH) show a composition bias toward polar residues.

In terms of assembly, component of the 18S U1 snRNP particle, a subcomplex of the spliceosome. Interacts with the nuclear cap-binding complex CBC1-CBC2 (yCBC). Directly contacts intronic sequences of substrate pre-RNA.

It is found in the nucleus. In terms of biological role, component of the U1 snRNP particle, which recognizes and binds the 5'-splice site of pre-mRNA. Together with other non-snRNP factors, U1 snRNP forms the spliceosomal commitment complex, that targets pre-mRNA to the splicing pathway. The protein is 56 kDa U1 small nuclear ribonucleoprotein component (SNU56) of Saccharomyces cerevisiae (strain ATCC 204508 / S288c) (Baker's yeast).